Reading from the N-terminus, the 1197-residue chain is MDLYMMNCELLATCSALGYLEGGTYHKEPDCLESVKDLIRYLRHEDETRDVRQQLGAAQILQSDLLPILTQHRQDKPLFDAVIRLMVNLTQPALLCFGSVPKDSSVRHHFLQVLTYLQAYKEAFASEKAFGVLSETLYELLQLGWEDRQEEDNLLIERILLLVRNILHVPANLEQEKSIDDDASIHDRLLWAIHLSGMDDLLLFLSSSSAEQQWSLHVLEIISLMFRDQTPEQLAGVGQGRLAQERSTDVAELEVLRQREMAEKRARALQRGNRHSRFGGSYIVQGLKSIGEKDVVFHKGLHNLQNYSSDLGKQPRRVPKRRQAAQELSVHRRSVLNVRLFLRDFCSEFLENCYNPLMGAVKDHLLRERAQQHDETYYMWAMAFFMAFNRAATFRPGLVSETLSIRTFHFVEQNLTNYYEMMLTDRKEAASWARRMHLALKAYQELLATVNEMDMCPDEAVRESSRIIKNNIFYMMEYRELFLALFRKFDERYHPRSFLRDLVETTHLFLKMLERFCRSRGNLMVQNKRKKRKKKKKVQDQGVAFSQSPGELEAMWPALAEQLLQCAQDPELSVDPVVPFDAASEVPVEEQRVEAMVRIQDCLTAGQAPQALALLRSAREVWPEGNAFGSPVISPGEEMQLLKQILSTPLPRQQEPEEGDAEEEEEEEEEEELQVVQVSEKEFNFLEYLKRFASSTIVRAYVLLLRSYRQNSAHTNHCIAKMLHRLAHGLGMEALLFQLSLFCLFNRLLSDPAAAAYKELVTFAKYIIGKFFALAAVNQKAFVELLFWKNTAVVREMTQGYGSLDSGSSSHRAPLWSPEEEAQLQELYLAHKDVEGQDVVETILAHLKVVPRTRKQVIHHLVRMGLADSVKEFQKRKGTQIVLWTEDQELELQRLFEEFRDSDDVLGQIMKNITAKRSRARVVDKLLALGLVSERRQLYKKRRKKLAPSCMQNGEKSPRDPWQEDPEEEDEHLPEDESEDEESEEGLPSGQGQGSSSLSAENLGESLRQEGLSAPLLWLQSSLIRAANDREEDGCSQAIPLVPLTEENEEAMENEQFQHLLRKLGIRPPSSGQETFWRIPAKLSSTQLRRVAASLSQQENEEEREEEPEPGVPGEQGPSEEHRTEALRALLSARKRKAGLGPTEEEATGEEEWNSAPKKRQLLDSDEEEDDEGRRQAVSGTPRVHRKKRFQIEDEDD.

The interval 1-309 is required for homodimerization and for interaction with CRY1 and CHEK1; sequence MDLYMMNCEL…GLHNLQNYSS (309 aa). Residue serine 281 is modified to Phosphoserine. Disordered regions lie at residues 647–674 and 943–1002; these read STPLPRQQEPEEGDAEEEEEEEEEEELQ and RKKL…SAEN. A compositionally biased stretch (acidic residues) spans 656 to 673; the sequence is PEEGDAEEEEEEEEEEEL. A DNA-binding domain region spans residues 810 to 949; sequence SHRAPLWSPE…KKRRKKLAPS (140 aa). The span at 963–985 shows a compositional bias: acidic residues; it reads QEDPEEEDEHLPEDESEDEESEE. Residues 986 to 999 are compositionally biased toward low complexity; it reads GLPSGQGQGSSSLS. The tract at residues 997 to 1095 is interaction with PARP1; sequence SLSAENLGES…TQLRRVAASL (99 aa). A phosphoserine mark is found at serine 1071 and serine 1084. Residues 1079–1197 are required for nuclear localization; it reads IPAKLSSTQL…KRFQIEDEDD (119 aa). Residue threonine 1086 is modified to Phosphothreonine. Positions 1088–1197 are disordered; it reads LRRVAASLSQ…KRFQIEDEDD (110 aa). Acidic residues-rich tracts occupy residues 1099-1109 and 1143-1153; these read ENEEEREEEPE and TEEEATGEEEW. At serine 1165 the chain carries Phosphoserine.

The protein belongs to the timeless family. As to quaternary structure, monomer. Homodimer or homomultimer. Component of the circadian core oscillator, which includes the CRY proteins, CLOCK or NPAS2, ARTNL/BMAL1 or ARTNL2/BMAL2, CSKN1D and/or CSNK1E, TIMELESS, and the PER proteins. Interacts directly with PER2; the interaction with PER2 is via its second PAS domain. Interacts directly with PER1 and PER3. Interacts with CRY1. Interacts with CRY2. Interacts with CHEK1, ATR and ATRIP. Interacts with CLSPN. Interacts (via N-terminus) with TIPIN. The TIMELESS-TIPIN heterodimer binds preferably to guanine-rich quadruplex-forming (G4) DNA structures. Associates with the MCM2-7 complex. Interacts with DNA polymerases alpha, delta and epsilon. Interacts with DDX11; this interaction increases recruitment of both proteins onto chromatin in response to replication stress induction by hydroxyurea. Interacts with PARP1; interaction is direct and independent of poly-ADP-ribose. Predominantly and robustly expressed in proliferative organs (spleen, thymus, intestine and testis) compared to those more differentiated such as kidney and liver (at protein level). Expressed in all tissues examined including brain, heart, lung, liver, skeletal muscle, kidney, placenta, pancreas, spleen, thymus and testis. Strongly expressed in the suprachiasmatic nucleus (SCN) and pars tuberalis, moderately in the cingulate cortex, pyrimidal cell layer of the piriform cortex, periventricular part of the caudate putamen, and granular layer of the cerebellum, and weakly in the cerebral cortex, gyrus dentatus, hippocampus and thalamic nuclei. In embryonic kidney, expression is highest in regions of active ureteric bud cell branching.

It is found in the nucleus. It localises to the chromosome. Its function is as follows. Plays an important role in the control of DNA replication, maintenance of replication fork stability, maintenance of genome stability throughout normal DNA replication, DNA repair and in the regulation of the circadian clock. Required to stabilize replication forks during DNA replication by forming a complex with TIPIN: this complex regulates DNA replication processes under both normal and stress conditions, stabilizes replication forks and influences both CHEK1 phosphorylation and the intra-S phase checkpoint in response to genotoxic stress. During DNA replication, inhibits the CMG complex ATPase activity and activates DNA polymerases catalytic activities, coupling DNA unwinding and DNA synthesis. TIMELESS promotes TIPIN nuclear localization. Plays a role in maintaining processive DNA replication past genomic guanine-rich DNA sequences that form G-quadruplex (G4) structures, possibly together with DDX1. Involved in cell survival after DNA damage or replication stress by promoting DNA repair. In response to double-strand breaks (DSBs), accumulates at DNA damage sites and promotes homologous recombination repair via its interaction with PARP1. May be specifically required for the ATR-CHEK1 pathway in the replication checkpoint induced by hydroxyurea or ultraviolet light. Involved in the determination of period length and in the DNA damage-dependent phase advancing of the circadian clock. Negatively regulates CLOCK|NPAS2-ARTNL/BMAL1|ARTNL2/BMAL2-induced transactivation of PER1 possibly via translocation of PER1 into the nucleus. May also play an important role in epithelial cell morphogenesis and formation of branching tubules. The chain is Protein timeless homolog from Mus musculus (Mouse).